Consider the following 949-residue polypeptide: Glycine dehydrogenase (decarboxylating) (949 aa).

Lys-704 is modified (N6-(pyridoxal phosphate)lysine).

This sequence belongs to the GcvP family. The glycine cleavage system is composed of four proteins: P, T, L and H. The cofactor is pyridoxal 5'-phosphate.

It catalyses the reaction N(6)-[(R)-lipoyl]-L-lysyl-[glycine-cleavage complex H protein] + glycine + H(+) = N(6)-[(R)-S(8)-aminomethyldihydrolipoyl]-L-lysyl-[glycine-cleavage complex H protein] + CO2. Its function is as follows. The glycine cleavage system catalyzes the degradation of glycine. The P protein binds the alpha-amino group of glycine through its pyridoxal phosphate cofactor; CO(2) is released and the remaining methylamine moiety is then transferred to the lipoamide cofactor of the H protein. The chain is Glycine dehydrogenase (decarboxylating) from Bacteroides fragilis (strain ATCC 25285 / DSM 2151 / CCUG 4856 / JCM 11019 / LMG 10263 / NCTC 9343 / Onslow / VPI 2553 / EN-2).